Consider the following 446-residue polypeptide: Ribosome biogenesis protein WDR12 homolog (446 aa).

The segment at 21 to 105 is ubiquitin-like (UBL) domain; sequence VQITFFSKDK…ETILKIECII (85 aa). WD repeat units lie at residues 171-211 and 216-255; these read KCSG…LVEK and GHER…EATI. A disordered region spans residues 256 to 275; that stretch reads YEKEEEESSAKKKRKKDTRT. 4 WD repeats span residues 284-324, 326-365, 371-412, and 416-446; these read GHRD…EVSR, KGPK…GAMV, GHQN…SSLF, and GHED…FETS.

This sequence belongs to the WD repeat WDR12/YTM1 family.

Its subcellular location is the nucleus. The protein resides in the nucleolus. It localises to the nucleoplasm. Required for maturation of ribosomal RNAs and formation of the large ribosomal subunit. The polypeptide is Ribosome biogenesis protein WDR12 homolog (Caenorhabditis briggsae).